The sequence spans 130 residues: Small ribosomal subunit protein uS9 (130 aa).

It belongs to the universal ribosomal protein uS9 family.

The chain is Small ribosomal subunit protein uS9 from Idiomarina loihiensis (strain ATCC BAA-735 / DSM 15497 / L2-TR).